The primary structure comprises 147 residues: Small ribosomal subunit protein uS9 (147 aa).

The protein belongs to the universal ribosomal protein uS9 family.

The chain is Small ribosomal subunit protein uS9 (rps16) from Dictyostelium discoideum (Social amoeba).